A 348-amino-acid polypeptide reads, in one-letter code: DNA-directed RNA polymerase subunit alpha (348 aa).

The alpha N-terminal domain (alpha-NTD) stretch occupies residues Met-1–Asp-243. Positions Val-260–Ala-348 are alpha C-terminal domain (alpha-CTD).

The protein belongs to the RNA polymerase alpha chain family. Homodimer. The RNAP catalytic core consists of 2 alpha, 1 beta, 1 beta' and 1 omega subunit. When a sigma factor is associated with the core the holoenzyme is formed, which can initiate transcription.

The catalysed reaction is RNA(n) + a ribonucleoside 5'-triphosphate = RNA(n+1) + diphosphate. In terms of biological role, DNA-dependent RNA polymerase catalyzes the transcription of DNA into RNA using the four ribonucleoside triphosphates as substrates. This is DNA-directed RNA polymerase subunit alpha from Oleidesulfovibrio alaskensis (strain ATCC BAA-1058 / DSM 17464 / G20) (Desulfovibrio alaskensis).